A 379-amino-acid chain; its full sequence is Leukocyte elastase inhibitor (379 aa).

Met1 bears the N-acetylmethionine mark. N6-acetyllysine occurs at positions 137 and 177. Residues 351–379 (NFNADHPFIFFIRHNPSANILFLGRFSSP) are CARD-binding motif (CBM).

The protein belongs to the serpin family. Ov-serpin subfamily. Monomer. Interacts (via C-terminus) with CASP1; CASP4 (via CARD domain) and CASP5; these interactions regulate the activity of inflammatory caspases. Interacts with PRTN3. Interacts with GZMH. Interacts with TMSB4. The N-terminus is blocked.

It localises to the secreted. It is found in the cytoplasm. Its subcellular location is the cytolytic granule. The protein localises to the early endosome. Its function is as follows. Neutrophil serine protease inhibitor that plays an essential role in the regulation of the innate immune response, inflammation and cellular homeostasis. Acts primarily to protect the cell from proteases released in the cytoplasm during stress or infection. These proteases are important in killing microbes but when released from granules, these potent enzymes also destroy host proteins and contribute to mortality. Regulates the activity of the neutrophil proteases elastase, cathepsin G, proteinase-3, chymase, chymotrypsin, and kallikrein-3. Also acts as a potent intracellular inhibitor of GZMH by directly blocking its proteolytic activity. During inflammation, limits the activity of inflammatory caspases CASP1, CASP4 and CASP5 by suppressing their caspase-recruitment domain (CARD) oligomerization and enzymatic activation. When secreted, promotes the proliferation of beta-cells via its protease inhibitory function. In Equus caballus (Horse), this protein is Leukocyte elastase inhibitor (SERPINB1).